The chain runs to 626 residues: Phosphomethylpyrimidine synthase (626 aa).

The segment covering 92 to 106 (AREVKPEDNGLKGPD) has biased composition (basic and acidic residues). The disordered stretch occupies residues 92–117 (AREVKPEDNGLKGPDRSAGVPPFPNV). Substrate-binding positions include Asn219, Met248, Tyr277, His313, 333 to 335 (SRG), 374 to 377 (DGLR), and Glu413. His417 lines the Zn(2+) pocket. Tyr440 serves as a coordination point for substrate. His481 serves as a coordination point for Zn(2+). The [4Fe-4S] cluster site is built by Cys561, Cys564, and Cys569.

Belongs to the ThiC family. As to quaternary structure, homodimer. The cofactor is [4Fe-4S] cluster.

The enzyme catalyses 5-amino-1-(5-phospho-beta-D-ribosyl)imidazole + S-adenosyl-L-methionine = 4-amino-2-methyl-5-(phosphooxymethyl)pyrimidine + CO + 5'-deoxyadenosine + formate + L-methionine + 3 H(+). It functions in the pathway cofactor biosynthesis; thiamine diphosphate biosynthesis. In terms of biological role, catalyzes the synthesis of the hydroxymethylpyrimidine phosphate (HMP-P) moiety of thiamine from aminoimidazole ribotide (AIR) in a radical S-adenosyl-L-methionine (SAM)-dependent reaction. The protein is Phosphomethylpyrimidine synthase of Novosphingobium aromaticivorans (strain ATCC 700278 / DSM 12444 / CCUG 56034 / CIP 105152 / NBRC 16084 / F199).